Here is a 104-residue protein sequence, read N- to C-terminus: Phosphoribosyl-ATP pyrophosphatase (104 aa).

Belongs to the PRA-PH family.

It localises to the cytoplasm. It carries out the reaction 1-(5-phospho-beta-D-ribosyl)-ATP + H2O = 1-(5-phospho-beta-D-ribosyl)-5'-AMP + diphosphate + H(+). The protein operates within amino-acid biosynthesis; L-histidine biosynthesis; L-histidine from 5-phospho-alpha-D-ribose 1-diphosphate: step 2/9. This chain is Phosphoribosyl-ATP pyrophosphatase, found in Nitrosococcus oceani (strain ATCC 19707 / BCRC 17464 / JCM 30415 / NCIMB 11848 / C-107).